The chain runs to 168 residues: Fusion protein P6 (168 aa).

The next 4 helical transmembrane spans lie at 29 to 49 (IWPL…AGFF), 52 to 72 (AGFT…TPTL), 94 to 114 (FQSL…ALIA), and 143 to 163 (ALPG…LWPS).

As to quaternary structure, interacts with P3.

The protein resides in the virion membrane. Functionally, mediates the fusion with the host outer membrane during virus entry into the host cell. In Pseudomonas savastanoi pv. phaseolicola (Pseudomonas syringae pv. phaseolicola), this protein is Fusion protein P6 (P6).